A 121-amino-acid chain; its full sequence is Large ribosomal subunit protein bL19 (121 aa).

It belongs to the bacterial ribosomal protein bL19 family.

Its function is as follows. This protein is located at the 30S-50S ribosomal subunit interface and may play a role in the structure and function of the aminoacyl-tRNA binding site. The polypeptide is Large ribosomal subunit protein bL19 (Neisseria meningitidis serogroup C (strain 053442)).